The sequence spans 109 residues: Flagellar hook-basal body complex protein FliE (109 aa).

This sequence belongs to the FliE family.

It localises to the bacterial flagellum basal body. The polypeptide is Flagellar hook-basal body complex protein FliE (Stutzerimonas stutzeri (strain A1501) (Pseudomonas stutzeri)).